Here is a 523-residue protein sequence, read N- to C-terminus: Butyrophilin subfamily 2 member A2 (523 aa).

Residues 1 to 32 form the signal peptide; that stretch reads MEPAAALHFSLPASLLLLLLLLLLSLCALVSA. Topologically, residues 33 to 265 are extracellular; the sequence is QFTVVGPANP…AVILTASPWM (233 aa). Residues 34 to 145 enclose the Ig-like V-type domain; it reads FTVVGPANPI…SYDEAILRLV (112 aa). N-linked (GlcNAc...) asparagine glycosylation is found at Asn-50, Asn-118, Asn-220, and Asn-226. An intrachain disulfide couples Cys-55 to Cys-129. The Ig-like C2-type domain maps to 153-234; sequence PLIEIKAQED…VNNTLLGQEK (82 aa). The helical transmembrane segment at 266–286 threads the bilayer; that stretch reads VSMTVILAVFIIFMAVSICCI. The stretch at 286–321 forms a coiled coil; sequence IKKLQREKKILSGEKKVEQEEKEIAQQLQEELRWRR. Over 287–523 the chain is Cytoplasmic; it reads KKLQREKKIL…LHRVGTHQSL (237 aa). A B30.2/SPRY domain is found at 309–502; that stretch reads IAQQLQEELR…IFICPALTGA (194 aa).

Belongs to the immunoglobulin superfamily. BTN/MOG family. N-glycosylated. Highly expressed in brain, bone marrow, small intestine, muscle, spleen and pancreas. Moderate expression was seen in lung, liver and kidney.

The protein resides in the membrane. Functionally, inhibits the proliferation of CD4 and CD8 T-cells activated by anti-CD3 antibodies, T-cell metabolism and IL2 and IFNG secretion. In Homo sapiens (Human), this protein is Butyrophilin subfamily 2 member A2 (BTN2A2).